The chain runs to 407 residues: Lysosomal phospholipase A and acyltransferase (407 aa).

The signal sequence occupies residues 1–29; that stretch reads MGCLCLYRSTLLTGGLLFLLMLADPAFPA. Asp41 provides a ligand contact to substrate. The cysteines at positions 60 and 84 are disulfide-linked. An N-linked (GlcNAc...) asparagine glycan is attached at Asn94. Ser193 serves as the catalytic Acyl-ester intermediate. Ser193 contributes to the Zn(2+) binding site. Residue Met194 participates in substrate binding. Residue Asn284 is glycosylated (N-linked (GlcNAc...) asparagine). Active-site charge relay system residues include Asp355 and His387. Zn(2+) is bound at residue His387. Residue Asn393 is glycosylated (N-linked (GlcNAc...) asparagine).

The protein belongs to the AB hydrolase superfamily. Lipase family. N-glycosylated. In terms of processing, N-glycosylated. N-glycosylation is important for maturation of the enzyme and normal subcellular location. In terms of tissue distribution, detected in brain (at protein level).

It localises to the lysosome. The protein resides in the secreted. It is found in the membrane. The catalysed reaction is a 1,2-diacyl-sn-glycero-3-phosphocholine + H2O = a 2-acyl-sn-glycero-3-phosphocholine + a fatty acid + H(+). It catalyses the reaction 1-hexadecanoyl-2-(9Z-octadecenoyl)-sn-glycero-3-phosphocholine + H2O = 2-(9Z-octadecenoyl)-sn-glycero-3-phosphocholine + hexadecanoate + H(+). It carries out the reaction 1,2-di-(9Z-octadecenoyl)-sn-glycero-3-phosphocholine + H2O = 2-(9Z-octadecenoyl)-sn-glycero-3-phosphocholine + (9Z)-octadecenoate + H(+). The enzyme catalyses 1-hexadecanoyl-2-glutaroyl-sn-glycero-3-phosphocholine + H2O = 2-glutaroyl-sn-glycero-3-phosphocholine + hexadecanoate + H(+). The catalysed reaction is 1-hexadecanoyl-2-nonadioyl-sn-glycero-3-phosphocholine + H2O = 2-nonadioyl-sn-glycero-3-phosphocholine + hexadecanoate + H(+). It catalyses the reaction 1-hexadecanoyl-2-(5-oxopentanoyl)-sn-glycero-3-phosphocholine + H2O = 2-(5-oxopentanoyl)-sn-glycero-3-phosphocholine + hexadecanoate + H(+). It carries out the reaction 1-hexadecanoyl-2-(9-oxononanoyl)-sn-glycero-3-phosphocholine + H2O = 2-(9-oxononanoyl)-sn-glycero-3-phosphocholine + hexadecanoate + H(+). The enzyme catalyses 1,2-dihexadecanoyl-sn-glycero-3-phosphocholine + H2O = 2-hexadecanoyl-sn-glycero-3-phosphocholine + hexadecanoate + H(+). The catalysed reaction is a 1,2-diacyl-sn-glycero-3-phosphocholine + H2O = a 1-acyl-sn-glycero-3-phosphocholine + a fatty acid + H(+). It catalyses the reaction 1-hexadecanoyl-2-(9Z-octadecenoyl)-sn-glycero-3-phosphocholine + H2O = 1-hexadecanoyl-sn-glycero-3-phosphocholine + (9Z)-octadecenoate + H(+). It carries out the reaction 1,2-di-(9Z-octadecenoyl)-sn-glycero-3-phosphocholine + H2O = 1-(9Z-octadecenoyl)-sn-glycero-3-phosphocholine + (9Z)-octadecenoate + H(+). The enzyme catalyses 1,2-dihexadecanoyl-sn-glycero-3-phosphocholine + H2O = 1-hexadecanoyl-sn-glycero-3-phosphocholine + hexadecanoate + H(+). The catalysed reaction is a 1-acyl-sn-glycero-3-phosphocholine + H2O = sn-glycerol 3-phosphocholine + a fatty acid + H(+). It catalyses the reaction 1-hexadecanoyl-sn-glycero-3-phosphocholine + H2O = sn-glycerol 3-phosphocholine + hexadecanoate + H(+). It carries out the reaction N-(acetyl)-sphing-4-enine + a 1,2-diacyl-sn-glycero-3-phosphoethanolamine = 1-O-acyl-N-(acetyl)-sphing-4-enine + a 2-acyl-sn-glycero-3-phosphoethanolamine. The enzyme catalyses 1-hexadecanoyl-2-(9Z-octadecenoyl)-sn-glycero-3-phosphoethanolamine + N-(acetyl)-sphing-4-enine = 2-(9Z-octadecenoyl)-sn-glycero-3-phosphoethanolamine + 1-hexadecanoyl-N-(acetyl)-sphing-4-enine. The catalysed reaction is 1-hexadecanoyl-2-(9Z,12Z-octadecadienoyl)-sn-glycero-3-phosphoethanolamine + N-(acetyl)-sphing-4-enine = 2-(9Z,12Z)-octadecadienoyl-sn-glycero-3-phosphoethanolamine + 1-hexadecanoyl-N-(acetyl)-sphing-4-enine. It catalyses the reaction 1-hexadecanoyl-2-(5Z,8Z,11Z,14Z-eicosatetraenoyl)-sn-glycero-3-phosphoethanolamine + N-(acetyl)-sphing-4-enine = 2-(5Z,8Z,11Z,14Z)-eicosatetraenoyl-sn-glycero-3-phosphoethanolamine + 1-hexadecanoyl-N-(acetyl)-sphing-4-enine. It carries out the reaction N-(acetyl)-sphing-4-enine + a 1,2-diacyl-sn-glycero-3-phosphoethanolamine = 1-O-acyl-N-(acetyl)-sphing-4-enine + a 1-acyl-sn-glycero-3-phosphoethanolamine. The enzyme catalyses 1-hexadecanoyl-2-(9Z-octadecenoyl)-sn-glycero-3-phosphoethanolamine + N-(acetyl)-sphing-4-enine = 1-(9Z-octadecenoyl)-N-(acetyl)-sphing-4-enine + 1-hexadecanoyl-sn-glycero-3-phosphoethanolamine. The catalysed reaction is 1-hexadecanoyl-2-(9Z,12Z-octadecadienoyl)-sn-glycero-3-phosphoethanolamine + N-(acetyl)-sphing-4-enine = 1-(9Z,12Z-octadecadienoyl)-N-acetylsphing-4-enine + 1-hexadecanoyl-sn-glycero-3-phosphoethanolamine. It catalyses the reaction 1-hexadecanoyl-2-(5Z,8Z,11Z,14Z-eicosatetraenoyl)-sn-glycero-3-phosphoethanolamine + N-(acetyl)-sphing-4-enine = 1-(5Z,8Z,11Z,14Z)-eicosatetraenoyl-N-(acetyl)-sphing-4-enine + 1-hexadecanoyl-sn-glycero-3-phosphoethanolamine. It carries out the reaction N-(acetyl)-sphing-4-enine + a 1,2-diacyl-sn-glycero-3-phosphocholine = 1-O-acyl-N-(acetyl)-sphing-4-enine + a 2-acyl-sn-glycero-3-phosphocholine. The enzyme catalyses 1-hexadecanoyl-2-(9Z-octadecenoyl)-sn-glycero-3-phosphocholine + N-(acetyl)-sphing-4-enine = 1-hexadecanoyl-N-(acetyl)-sphing-4-enine + 2-(9Z-octadecenoyl)-sn-glycero-3-phosphocholine. The catalysed reaction is 1-hexadecanoyl-2-(9Z,12Z-octadecadienoyl)-sn-glycero-3-phosphocholine + N-(acetyl)-sphing-4-enine = 2-(9Z,12Z-octadecadienoyl)-sn-glycero-3-phosphocholine + 1-hexadecanoyl-N-(acetyl)-sphing-4-enine. It catalyses the reaction 1-hexadecanoyl-2-(5Z,8Z,11Z,14Z-eicosatetraenoyl)-sn-glycero-3-phosphocholine + N-(acetyl)-sphing-4-enine = 1-hexadecanoyl-N-(acetyl)-sphing-4-enine + 2-(5Z,8Z,11Z,14Z)-eicosatetraenoyl-sn-glycero-3-phosphocholine. It carries out the reaction 1-hexadecanoyl-2-(4Z,7Z,10Z,13Z,16Z,19Z-docosahexaenoyl)-sn-glycero-3-phosphocholine + N-(acetyl)-sphing-4-enine = 2-(4Z,7Z,10Z,13Z,16Z,19Z-docosahexaenoyl)-sn-glycero-3-phosphocholine + 1-hexadecanoyl-N-(acetyl)-sphing-4-enine. The enzyme catalyses 1-hexadecanoyl-2-nonadioyl-sn-glycero-3-phosphocholine + N-(acetyl)-sphing-4-enine = 2-nonadioyl-sn-glycero-3-phosphocholine + 1-hexadecanoyl-N-(acetyl)-sphing-4-enine. The catalysed reaction is 1-octadecanoyl-2-(9Z-octadecenoyl)-sn-glycero-3-phosphocholine + N-(acetyl)-sphing-4-enine = 1-octadecanoyl-N-(acetyl)-sphing-4-enine + 2-(9Z-octadecenoyl)-sn-glycero-3-phosphocholine. It catalyses the reaction 1-(9Z)-octadecenoyl-2-octadecanoyl-sn-glycero-3-phosphocholine + N-(acetyl)-sphing-4-enine = 2-octadecanoyl-sn-glycero-3-phosphocholine + 1-(9Z-octadecenoyl)-N-(acetyl)-sphing-4-enine. It carries out the reaction 1-octadecanoyl-2-(5Z,8Z,11Z,14Z-eicosatetraenoyl)-sn-glycero-3-phosphocholine + N-(acetyl)-sphing-4-enine = 1-octadecanoyl-N-(acetyl)-sphing-4-enine + 2-(5Z,8Z,11Z,14Z)-eicosatetraenoyl-sn-glycero-3-phosphocholine. The enzyme catalyses 1-(9Z-octadecenoyl)-2-hexadecanoyl-sn-glycero-3-phosphocholine + N-(acetyl)-sphing-4-enine = 1-(9Z-octadecenoyl)-N-(acetyl)-sphing-4-enine + 2-hexadecanoyl-sn-glycero-3-phosphocholine. The catalysed reaction is N-(acetyl)-sphing-4-enine + a 1,2-diacyl-sn-glycero-3-phosphocholine = 1-O-acyl-N-(acetyl)-sphing-4-enine + a 1-acyl-sn-glycero-3-phosphocholine. It catalyses the reaction 1-hexadecanoyl-2-(9Z-octadecenoyl)-sn-glycero-3-phosphocholine + N-(acetyl)-sphing-4-enine = 1-(9Z-octadecenoyl)-N-(acetyl)-sphing-4-enine + 1-hexadecanoyl-sn-glycero-3-phosphocholine. It carries out the reaction 1-hexadecanoyl-2-(9Z,12Z-octadecadienoyl)-sn-glycero-3-phosphocholine + N-(acetyl)-sphing-4-enine = 1-(9Z,12Z-octadecadienoyl)-N-acetylsphing-4-enine + 1-hexadecanoyl-sn-glycero-3-phosphocholine. The enzyme catalyses 1-hexadecanoyl-2-(5Z,8Z,11Z,14Z-eicosatetraenoyl)-sn-glycero-3-phosphocholine + N-(acetyl)-sphing-4-enine = 1-(5Z,8Z,11Z,14Z)-eicosatetraenoyl-N-(acetyl)-sphing-4-enine + 1-hexadecanoyl-sn-glycero-3-phosphocholine. The catalysed reaction is 1-hexadecanoyl-2-(4Z,7Z,10Z,13Z,16Z,19Z-docosahexaenoyl)-sn-glycero-3-phosphocholine + N-(acetyl)-sphing-4-enine = 1-(4Z,7Z,10Z,13Z,16Z,19Z-docosahexaenoyl)-N-(acetyl)-sphing-4-enine + 1-hexadecanoyl-sn-glycero-3-phosphocholine. It catalyses the reaction 1-octadecanoyl-2-(9Z-octadecenoyl)-sn-glycero-3-phosphocholine + N-(acetyl)-sphing-4-enine = 1-(9Z-octadecenoyl)-N-(acetyl)-sphing-4-enine + 1-octadecanoyl-sn-glycero-3-phosphocholine. It carries out the reaction 1-octadecanoyl-2-(9Z,12Z)-octadecadienoyl-sn-glycero-3-phosphocholine + N-(acetyl)-sphing-4-enine = 1-(9Z,12Z-octadecadienoyl)-N-acetylsphing-4-enine + 1-octadecanoyl-sn-glycero-3-phosphocholine. The enzyme catalyses 1-(9Z-octadecenoyl)-2-hexadecanoyl-sn-glycero-3-phosphocholine + N-(acetyl)-sphing-4-enine = 1-hexadecanoyl-N-(acetyl)-sphing-4-enine + 1-(9Z-octadecenoyl)-sn-glycero-3-phosphocholine. The catalysed reaction is 1-(9Z)-octadecenoyl-2-octadecanoyl-sn-glycero-3-phosphocholine + N-(acetyl)-sphing-4-enine = 1-octadecanoyl-N-(acetyl)-sphing-4-enine + 1-(9Z-octadecenoyl)-sn-glycero-3-phosphocholine. It catalyses the reaction 1,2-di-(9Z-octadecenoyl)-sn-glycero-3-phosphocholine + N-(acetyl)-sphing-4-enine = 1-(9Z-octadecenoyl)-N-(acetyl)-sphing-4-enine + 1-(9Z-octadecenoyl)-sn-glycero-3-phosphocholine. It carries out the reaction 1-octadecanoyl-2-(5Z,8Z,11Z,14Z-eicosatetraenoyl)-sn-glycero-3-phosphocholine + N-(acetyl)-sphing-4-enine = 1-(5Z,8Z,11Z,14Z)-eicosatetraenoyl-N-(acetyl)-sphing-4-enine + 1-octadecanoyl-sn-glycero-3-phosphocholine. The enzyme catalyses a 1,2-diacyl-sn-glycero-3-phospho-L-serine + N-(acetyl)-sphing-4-enine = a 2-acyl-sn-glycero-3-phospho-L-serine + 1-O-acyl-N-(acetyl)-sphing-4-enine. The catalysed reaction is 1-octadecanoyl-2-(9Z-octadecenoyl)-sn-glycero-3-phospho-L-serine + N-(acetyl)-sphing-4-enine = 2-(9Z-octadecenoyl)-sn-glycero-3-phospho-L-serine + 1-octadecanoyl-N-(acetyl)-sphing-4-enine. It catalyses the reaction a 1,2-diacyl-sn-glycero-3-phospho-L-serine + N-(acetyl)-sphing-4-enine = 1-O-acyl-N-(acetyl)-sphing-4-enine + a 1-acyl-sn-glycero-3-phospho-L-serine. It carries out the reaction 1-octadecanoyl-2-(9Z-octadecenoyl)-sn-glycero-3-phospho-L-serine + N-(acetyl)-sphing-4-enine = 1-octadecanoyl-sn-glycero-3-phosphoserine + 1-(9Z-octadecenoyl)-N-(acetyl)-sphing-4-enine. The enzyme catalyses a 1,2-diacyl-sn-glycero-3-phospho-(1'-sn-glycerol) + N-(acetyl)-sphing-4-enine = 2-acyl-sn-glycero-3-phospho-(1'-sn-glycerol) + 1-O-acyl-N-(acetyl)-sphing-4-enine. The catalysed reaction is 1-octadecanoyl-2-(9Z-octadecenoyl)-sn-glycero-3-phospho-(1'-sn-glycerol) + N-(acetyl)-sphing-4-enine = 2-(9Z-octadecenoyl)-sn-glycero-3-phospho-(1'-sn-glycerol) + 1-octadecanoyl-N-(acetyl)-sphing-4-enine. It catalyses the reaction a 1,2-diacyl-sn-glycero-3-phospho-(1'-sn-glycerol) + N-(acetyl)-sphing-4-enine = 1-O-acyl-N-(acetyl)-sphing-4-enine + 1-acyl-sn-glycero-3-phospho-(1'-sn-glycerol). It carries out the reaction 1-octadecanoyl-2-(9Z-octadecenoyl)-sn-glycero-3-phospho-(1'-sn-glycerol) + N-(acetyl)-sphing-4-enine = 1-octadecanoyl-sn-glycero-3-phospho-(1'-sn-glycerol) + 1-(9Z-octadecenoyl)-N-(acetyl)-sphing-4-enine. The enzyme catalyses an N-acylethanolamine + a 1,2-diacyl-sn-glycero-3-phosphocholine = 2-(acylamino)ethyl fatty acid + a 2-acyl-sn-glycero-3-phosphocholine. The catalysed reaction is an N-acylethanolamine + a 1,2-diacyl-sn-glycero-3-phosphocholine = 2-(acylamino)ethyl fatty acid + a 1-acyl-sn-glycero-3-phosphocholine. It catalyses the reaction N-(5Z,8Z,11Z,14Z-eicosatetraenoyl)-ethanolamine + 1,2-di-(9Z-octadecenoyl)-sn-glycero-3-phosphocholine = 2-[(5Z,8Z,11Z,14Z)-eicosatetraenoylamino]ethyl (9Z)-octadecenoate + (9Z-octadecenoyl)-sn-glycero-3-phosphocholine. It carries out the reaction N-(9Z-octadecenoyl) ethanolamine + 1,2-di-(9Z-octadecenoyl)-sn-glycero-3-phosphocholine = 2-[(9Z)-octadecenoylamino]ethyl (9Z)-octadecenoate + (9Z-octadecenoyl)-sn-glycero-3-phosphocholine. The enzyme catalyses a 3-acyl-sn-glycerol + a 1,2-diacyl-sn-glycero-3-phosphocholine = a 1,3-diacylglycerol + a 1-acyl-sn-glycero-3-phosphocholine. The catalysed reaction is a 3-acyl-sn-glycerol + a 1,2-diacyl-sn-glycero-3-phosphocholine = a 1,3-diacylglycerol + a 2-acyl-sn-glycero-3-phosphocholine. It catalyses the reaction 3-(9Z-octadecenoyl)-sn-glycerol + 1,2-di-(9Z-octadecenoyl)-sn-glycero-3-phosphocholine = 1,3-di-(9Z-octadecenoyl)-glycerol + (9Z-octadecenoyl)-sn-glycero-3-phosphocholine. It carries out the reaction 3-hexadecanoyl-sn-glycerol + 1,2-di-(9Z-octadecenoyl)-sn-glycero-3-phosphocholine = 1-(9Z)-octadecenoyl-3-hexadecanoyl-sn-glycerol + (9Z-octadecenoyl)-sn-glycero-3-phosphocholine. The enzyme catalyses a 1-acyl-sn-glycerol + a 1,2-diacyl-sn-glycero-3-phosphocholine = a 1,3-diacylglycerol + a 2-acyl-sn-glycero-3-phosphocholine. The catalysed reaction is a 1-acyl-sn-glycerol + a 1,2-diacyl-sn-glycero-3-phosphocholine = a 1,3-diacylglycerol + a 1-acyl-sn-glycero-3-phosphocholine. It catalyses the reaction 1-(9Z-octadecenoyl)-sn-glycerol + 1,2-di-(9Z-octadecenoyl)-sn-glycero-3-phosphocholine = 1,3-di-(9Z-octadecenoyl)-glycerol + (9Z-octadecenoyl)-sn-glycero-3-phosphocholine. It carries out the reaction 1-hexadecanoyl-sn-glycerol + 1,2-di-(9Z-octadecenoyl)-sn-glycero-3-phosphocholine = 1-hexadecanoyl-3-(9Z)-octadecenoyl-sn-glycerol + (9Z-octadecenoyl)-sn-glycero-3-phosphocholine. The enzyme catalyses a 2-acylglycerol + a 1,2-diacyl-sn-glycero-3-phosphocholine = a 1,2-diacylglycerol + a 2-acyl-sn-glycero-3-phosphocholine. The catalysed reaction is a 2-acylglycerol + a 1,2-diacyl-sn-glycero-3-phosphocholine = a 1,2-diacylglycerol + a 1-acyl-sn-glycero-3-phosphocholine. It catalyses the reaction 2-hexadecanoylglycerol + 1,2-di-(9Z-octadecenoyl)-sn-glycero-3-phosphocholine = 1-(9Z)-octadecenoyl-2-hexadecanoylglycerol + (9Z-octadecenoyl)-sn-glycero-3-phosphocholine. It carries out the reaction 1-O-alkylglycerol + a 1,2-diacyl-sn-glycero-3-phosphocholine = 1-O-alkyl-3-acylglycerol + a 1-acyl-sn-glycero-3-phosphocholine. The enzyme catalyses 1-O-alkylglycerol + a 1,2-diacyl-sn-glycero-3-phosphocholine = 1-O-alkyl-3-acylglycerol + a 2-acyl-sn-glycero-3-phosphocholine. The catalysed reaction is 1-O-hexadecylglycerol + 1,2-di-(9Z-octadecenoyl)-sn-glycero-3-phosphocholine = 1-O-hexadecyl-3-(9Z)-octadecenoylglycerol + (9Z-octadecenoyl)-sn-glycero-3-phosphocholine. It catalyses the reaction 1-O-alkyl-2-acyl-sn-glycerol + a 1,2-diacyl-sn-glycero-3-phosphocholine = 1-O-alkyl-2,3-diacyl-sn-glycerol + a 2-acyl-sn-glycero-3-phosphocholine. It carries out the reaction 1-O-alkyl-2-acyl-sn-glycerol + a 1,2-diacyl-sn-glycero-3-phosphocholine = 1-O-alkyl-2,3-diacyl-sn-glycerol + a 1-acyl-sn-glycero-3-phosphocholine. The enzyme catalyses 1-O-hexadecyl-2-acetyl-sn-glycerol + 1,2-di-(9Z-octadecenoyl)-sn-glycero-3-phosphocholine = 1-O-hexadecyl-2-acetyl-3-(9Z)-octadecenoyl-sn-glycerol + (9Z-octadecenoyl)-sn-glycero-3-phosphocholine. The catalysed reaction is 1-O-hexadecyl-2-O-methyl-sn-glycerol + 1,2-di-(9Z-octadecenoyl)-sn-glycero-3-phosphocholine = 1-O-hexadecyl-2-O-methyl-3-(9Z)-octadecenoyl-sn-glycerol + (9Z-octadecenoyl)-sn-glycero-3-phosphocholine. It catalyses the reaction a 1,2-diacyl-sn-glycero-3-phosphoethanolamine + H2O = a 1-acyl-sn-glycero-3-phosphoethanolamine + a fatty acid + H(+). It carries out the reaction 1-acyl-2-(5Z,8Z,11Z,14Z)-eicosatetraenoyl-sn-glycero-3-phosphoethanolamine + H2O = a 1-acyl-sn-glycero-3-phosphoethanolamine + (5Z,8Z,11Z,14Z)-eicosatetraenoate + H(+). The enzyme catalyses a 1,2-diacyl-sn-glycero-3-phospho-(1'-sn-glycerol) + H2O = 1-acyl-sn-glycero-3-phospho-(1'-sn-glycerol) + a fatty acid + H(+). The catalysed reaction is 1-hexadecanoyl-2-(9Z-octadecenoyl)-sn-glycero-3-phospho-(1'-sn-glycerol) + H2O = 1-hexadecanoyl-sn-glycero-3-phospho-(1'-sn-glycerol) + (9Z)-octadecenoate + H(+). It catalyses the reaction a 1,2-diacyl-sn-glycero-3-phospho-(1'-sn-glycerol) + H2O = 2-acyl-sn-glycero-3-phospho-(1'-sn-glycerol) + a fatty acid + H(+). It carries out the reaction 1-hexadecanoyl-2-(9Z-octadecenoyl)-sn-glycero-3-phospho-(1'-sn-glycerol) + H2O = 2-(9Z-octadecenoyl)-sn-glycero-3-phospho-(1'-sn-glycerol) + hexadecanoate + H(+). Its activity is regulated as follows. Transacylase activity is completely inhibited by Triton X-100 and partially inhibited by heparin. Moderately activated by Mg(2+) and Ca(2+). Has dual calcium-independent phospholipase and O-acyltransferase activities with a potential role in glycerophospholipid homeostasis and remodeling of acyl groups of lipophilic alcohols present in acidic cellular compartments. Catalyzes hydrolysis of the ester bond of the fatty acyl group attached at sn-1 or sn-2 position of phospholipids (phospholipase A1 or A2 activity) and transfer it to the hydroxyl group at the first carbon of lipophilic alcohols (O-acyltransferase activity). Among preferred fatty acyl donors are phosphatidylcholines, phosphatidylethanolamines, phosphatidylglycerols and phosphatidylserines. Favors sn-2 over sn-1 deacylation of unsaturated fatty acyl groups of phosphatidylcholines, phosphatidylethanolamines, and phosphatidylglycerols. Among preferred fatty acyl acceptors are natural lipophilic alcohols including short-chain ceramide N-acetyl-sphingosine (C2 ceramide), alkylacylglycerols, monoacylglycerols, and acylethanolamides such as anandamide and oleoylethanolamide. Selectively hydrolyzes the sn-1 fatty acyl group of truncated oxidized phospholipids and may play a role in detoxification of reactive oxidized phospholipids during oxidative stress. Required for normal phospholipid degradation in alveolar macrophages with potential implications in the clearance of pulmonary surfactant, which is mainly composed of dipalmitoylphosphatidylcholine (1,2-dihexadecanoyl-sn-glycero-3-phosphocholine). Involved in the first step of bis(monoacylglycero)phosphate (BMP) de novo synthesis from phosphatidylglycerol (1,2-diacyl-sn-glycero-3-phospho-(1'-sn-glycerol), PG). BMP is an important player in cargo sorting and degradation, regulation of cellular cholesterol levels and intercellular communication. At neutral pH, hydrolyzes the sn-1 fatty acyl group of the lysophosphatidylcholines. This Bos taurus (Bovine) protein is Lysosomal phospholipase A and acyltransferase (PLA2G15).